Reading from the N-terminus, the 105-residue chain is Nitrogenase-stabilizing/protective protein NifW (105 aa).

Belongs to the NifW family. Homotrimer; associates with NifD.

Its function is as follows. May protect the nitrogenase Fe-Mo protein from oxidative damage. The polypeptide is Nitrogenase-stabilizing/protective protein NifW (Rhodospirillum centenum (strain ATCC 51521 / SW)).